Consider the following 76-residue polypeptide: Translation initiation factor IF-1 (76 aa).

An S1-like domain is found at 1-76; that stretch reads MEDMAKKDGV…TRGRIVYRYK (76 aa).

It belongs to the IF-1 family. In terms of assembly, component of the 30S ribosomal translation pre-initiation complex which assembles on the 30S ribosome in the order IF-2 and IF-3, IF-1 and N-formylmethionyl-tRNA(fMet); mRNA recruitment can occur at any time during PIC assembly.

It is found in the cytoplasm. In terms of biological role, one of the essential components for the initiation of protein synthesis. Stabilizes the binding of IF-2 and IF-3 on the 30S subunit to which N-formylmethionyl-tRNA(fMet) subsequently binds. Helps modulate mRNA selection, yielding the 30S pre-initiation complex (PIC). Upon addition of the 50S ribosomal subunit IF-1, IF-2 and IF-3 are released leaving the mature 70S translation initiation complex. The chain is Translation initiation factor IF-1 from Renibacterium salmoninarum (strain ATCC 33209 / DSM 20767 / JCM 11484 / NBRC 15589 / NCIMB 2235).